Consider the following 469-residue polypeptide: Ufm1-specific protease 2 (469 aa).

An N-acetylmethionine modification is found at Met-1. Active-site residues include Cys-302, Asp-426, and His-428.

It belongs to the peptidase C78 family. As to expression, expressed in brain.

The protein resides in the endoplasmic reticulum. The protein localises to the cytoplasm. Its subcellular location is the nucleus. Functionally, thiol-dependent isopeptidase that specifically cleaves UFM1, a ubiquitin-like modifier protein, from conjugated proteins, such as CD274/PD-L1, CYB5R3, DDRGK1, MRE11, RPL26/uL24, TRIP4 and RPL26/uL24. While it is also able to mediate the processing of UFM1 precursors, a prerequisite for conjugation reactions, UFSP2 mainly acts as a protein deUFMylase that mediates deconjugation of UFM1 from target proteins. Mediates deUFMylation of RPL26/uL24, a critical step to release the UFM1 ribosome E3 ligase (UREL) complex during the recycling of 60S ribosome subunits from the endoplasmic reticulum. Catalyzes deUFMylation of TRIP4, regulating intracellular nuclear receptors transactivation and thereby regulate cell proliferation and differentiation. The protein is Ufm1-specific protease 2 of Homo sapiens (Human).